We begin with the raw amino-acid sequence, 325 residues long: Biotin synthase (325 aa).

A Radical SAM core domain is found at 49 to 267 (TQVQISTLLS…IAAARISMPR (219 aa)). Positions 64, 68, and 71 each coordinate [4Fe-4S] cluster. Cys108, Cys139, Cys199, and Arg271 together coordinate [2Fe-2S] cluster.

This sequence belongs to the radical SAM superfamily. Biotin synthase family. In terms of assembly, homodimer. It depends on [4Fe-4S] cluster as a cofactor. Requires [2Fe-2S] cluster as cofactor.

It carries out the reaction (4R,5S)-dethiobiotin + (sulfur carrier)-SH + 2 reduced [2Fe-2S]-[ferredoxin] + 2 S-adenosyl-L-methionine = (sulfur carrier)-H + biotin + 2 5'-deoxyadenosine + 2 L-methionine + 2 oxidized [2Fe-2S]-[ferredoxin]. It participates in cofactor biosynthesis; biotin biosynthesis; biotin from 7,8-diaminononanoate: step 2/2. In terms of biological role, catalyzes the conversion of dethiobiotin (DTB) to biotin by the insertion of a sulfur atom into dethiobiotin via a radical-based mechanism. This Acidiphilium cryptum (strain JF-5) protein is Biotin synthase.